A 308-amino-acid chain; its full sequence is Ribosomal RNA small subunit methyltransferase H (308 aa).

S-adenosyl-L-methionine contacts are provided by residues 36-38 (GGH), aspartate 55, phenylalanine 86, aspartate 103, and glutamine 110.

This sequence belongs to the methyltransferase superfamily. RsmH family.

The protein localises to the cytoplasm. The enzyme catalyses cytidine(1402) in 16S rRNA + S-adenosyl-L-methionine = N(4)-methylcytidine(1402) in 16S rRNA + S-adenosyl-L-homocysteine + H(+). Specifically methylates the N4 position of cytidine in position 1402 (C1402) of 16S rRNA. The chain is Ribosomal RNA small subunit methyltransferase H from Helicobacter pylori (strain Shi470).